The chain runs to 571 residues: Cationic amino acid transporter 8 (571 aa).

The N-linked (GlcNAc...) asparagine glycan is linked to Asn-35. The next 6 helical transmembrane spans lie at 39-59, 94-114, 117-137, 148-168, 177-197, and 217-237; these read FWLL…YFDW, SLYP…GFLY, IGPK…WVFL, FLSF…ILTI, TFIL…PATL, and IFLI…LMPF. Asn-298, Asn-325, and Asn-346 each carry an N-linked (GlcNAc...) asparagine glycan. A helical transmembrane segment spans residues 365-385; the sequence is LFFKVLLSYPSICIIVYFILF. A glycan (N-linked (GlcNAc...) asparagine) is linked at Asn-386. The next 5 helical transmembrane spans lie at 405-425, 433-453, 461-481, 488-508, and 528-548; these read SIIN…IIFG, SAII…TALI, VSAF…YCFI, VVFG…SLLC, and VVLL…VLYF.

It belongs to the SLC43A transporter (TC 2.A.1.44) family.

The protein localises to the membrane. It carries out the reaction L-arginine(in) = L-arginine(out). Its function is as follows. Sodium-independent cationic amino acid transporter. Transports L-arginine, L-lysine, L-histidine and L-ornithine. This is Cationic amino acid transporter 8 from Plasmodium vivax (strain Salvador I).